Consider the following 30-residue polypeptide: Cyclotide hypa-A (30 aa).

The cyclopeptide (Gly-Asn) cross-link spans 1-30; sequence GIPCAESCVYIPCTITALLGCSCKNKVCYN. Cystine bridges form between Cys4/Cys21, Cys8/Cys23, and Cys13/Cys28.

This is a cyclic peptide.

In terms of biological role, probably participates in a plant defense mechanism. The chain is Cyclotide hypa-A from Pombalia parviflora (Violetilla).